The sequence spans 469 residues: tRNA-2-methylthio-N(6)-dimethylallyladenosine synthase (469 aa).

An MTTase N-terminal domain is found at 22–142 (RKVFIKTYGC…LPEALRRAKE (121 aa)). Residues Cys31, Cys67, Cys105, Cys183, Cys187, and Cys190 each contribute to the [4Fe-4S] cluster site. The Radical SAM core domain occupies 169-401 (RARGVTAFLT…QALLLKQQQE (233 aa)). The TRAM domain occupies 404–466 (ESCIGKEIDL…NNSLFAERAE (63 aa)).

Belongs to the methylthiotransferase family. MiaB subfamily. In terms of assembly, monomer. It depends on [4Fe-4S] cluster as a cofactor.

It is found in the cytoplasm. The enzyme catalyses N(6)-dimethylallyladenosine(37) in tRNA + (sulfur carrier)-SH + AH2 + 2 S-adenosyl-L-methionine = 2-methylsulfanyl-N(6)-dimethylallyladenosine(37) in tRNA + (sulfur carrier)-H + 5'-deoxyadenosine + L-methionine + A + S-adenosyl-L-homocysteine + 2 H(+). Its function is as follows. Catalyzes the methylthiolation of N6-(dimethylallyl)adenosine (i(6)A), leading to the formation of 2-methylthio-N6-(dimethylallyl)adenosine (ms(2)i(6)A) at position 37 in tRNAs that read codons beginning with uridine. This Rhizobium leguminosarum bv. trifolii (strain WSM2304) protein is tRNA-2-methylthio-N(6)-dimethylallyladenosine synthase.